The sequence spans 60 residues: Large ribosomal subunit protein uL30 (60 aa).

The protein belongs to the universal ribosomal protein uL30 family. Part of the 50S ribosomal subunit.

This is Large ribosomal subunit protein uL30 from Streptococcus pyogenes serotype M1.